The primary structure comprises 338 residues: Structural protein VP9 (338 aa).

It localises to the virion. In terms of biological role, plays an important role in virus transmission by the insect vector. May participate in the virus stability by binding clamp proteins and surrounding the pentameric turrets present in the virion. The polypeptide is Structural protein VP9 (Rice ragged stunt virus (isolate Thailand) (RRSV)).